Here is a 310-residue protein sequence, read N- to C-terminus: Ribosomal RNA small subunit methyltransferase H (310 aa).

Residues Gly32–His34, Asp52, Phe79, Asp100, and Gln107 contribute to the S-adenosyl-L-methionine site.

It belongs to the methyltransferase superfamily. RsmH family.

Its subcellular location is the cytoplasm. It carries out the reaction cytidine(1402) in 16S rRNA + S-adenosyl-L-methionine = N(4)-methylcytidine(1402) in 16S rRNA + S-adenosyl-L-homocysteine + H(+). Functionally, specifically methylates the N4 position of cytidine in position 1402 (C1402) of 16S rRNA. This chain is Ribosomal RNA small subunit methyltransferase H, found in Bacillus thuringiensis subsp. konkukian (strain 97-27).